The following is a 1216-amino-acid chain: Probable cation-transporting ATPase 13A5 (1216 aa).

The next 5 helical transmembrane spans lie at 33–53, 198–218, 222–242, 401–421, and 433–453; these read RALC…MFYW, LLVK…LTLW, GYIE…VLSV, FMVF…GVYM, and MALI…LTIG. Asp-486 (4-aspartylphosphate intermediate) is an active-site residue. Asn-650 and Asn-817 each carry an N-linked (GlcNAc...) asparagine glycan. 2 residues coordinate Mg(2+): Asp-848 and Asp-852. 6 helical membrane passes run 896-916, 933-950, 971-991, 1040-1060, 1075-1095, and 1113-1133; these read ALVS…IQFI, YLLQ…TMSI, LLLS…CTFL, FEGT…AFIF, LFSL…FCDF, and VSIL…EDAV.

It belongs to the cation transport ATPase (P-type) (TC 3.A.3) family. Type V subfamily. As to expression, specifically expressed in brain and stomach.

The protein resides in the membrane. The enzyme catalyses ATP + H2O = ADP + phosphate + H(+). This Mus musculus (Mouse) protein is Probable cation-transporting ATPase 13A5 (Atp13a5).